The chain runs to 150 residues: D-aminoacyl-tRNA deacylase (150 aa).

A Gly-cisPro motif, important for rejection of L-amino acids motif is present at residues 138–139 (GP).

This sequence belongs to the DTD family. As to quaternary structure, homodimer.

Its subcellular location is the cytoplasm. It carries out the reaction glycyl-tRNA(Ala) + H2O = tRNA(Ala) + glycine + H(+). The catalysed reaction is a D-aminoacyl-tRNA + H2O = a tRNA + a D-alpha-amino acid + H(+). Its function is as follows. An aminoacyl-tRNA editing enzyme that deacylates mischarged D-aminoacyl-tRNAs. Also deacylates mischarged glycyl-tRNA(Ala), protecting cells against glycine mischarging by AlaRS. Acts via tRNA-based rather than protein-based catalysis; rejects L-amino acids rather than detecting D-amino acids in the active site. By recycling D-aminoacyl-tRNA to D-amino acids and free tRNA molecules, this enzyme counteracts the toxicity associated with the formation of D-aminoacyl-tRNA entities in vivo and helps enforce protein L-homochirality. In Akkermansia muciniphila (strain ATCC BAA-835 / DSM 22959 / JCM 33894 / BCRC 81048 / CCUG 64013 / CIP 107961 / Muc), this protein is D-aminoacyl-tRNA deacylase.